We begin with the raw amino-acid sequence, 420 residues long: Gamma-glutamyl phosphate reductase (420 aa).

It belongs to the gamma-glutamyl phosphate reductase family.

Its subcellular location is the cytoplasm. It carries out the reaction L-glutamate 5-semialdehyde + phosphate + NADP(+) = L-glutamyl 5-phosphate + NADPH + H(+). Its pathway is amino-acid biosynthesis; L-proline biosynthesis; L-glutamate 5-semialdehyde from L-glutamate: step 2/2. Functionally, catalyzes the NADPH-dependent reduction of L-glutamate 5-phosphate into L-glutamate 5-semialdehyde and phosphate. The product spontaneously undergoes cyclization to form 1-pyrroline-5-carboxylate. The protein is Gamma-glutamyl phosphate reductase of Cereibacter sphaeroides (strain KD131 / KCTC 12085) (Rhodobacter sphaeroides).